The chain runs to 316 residues: Cell division protein FtsQ (316 aa).

Residues 1–34 form a disordered region; the sequence is MAKAARRTKSAPARRSPRRHARQTGATIRRPKRP. Over 1–61 the chain is Cytoplasmic; that stretch reads MAKAARRTKS…HPLLKQMAKR (61 aa). The chain crosses the membrane as a helical span at residues 62 to 80; the sequence is LLLILVIVGFLAGLWAARW. Topologically, residues 81–316 are periplasmic; that stretch reads PQLLATKTGE…AADPLVSDRI (236 aa). In terms of domain architecture, POTRA spans 97 to 165; it reads FSVRHVEIVG…DTLVVDIVER (69 aa). The tract at residues 295–316 is disordered; sequence PEPVKKATKPAKAADPLVSDRI.

Belongs to the FtsQ/DivIB family. FtsQ subfamily.

The protein resides in the cell inner membrane. Essential cell division protein. The protein is Cell division protein FtsQ of Zymomonas mobilis subsp. mobilis (strain ATCC 31821 / ZM4 / CP4).